The chain runs to 402 residues: Flavohemoprotein (402 aa).

The 136-residue stretch at 1-136 (MLSEKTIEIV…IADAFISIEA (136 aa)) folds into the Globin domain. Residue H85 participates in heme b binding. Residues Y95 and E135 each act as charge relay system in the active site. The tract at residues 147 to 402 (GGWKDFRNFV…EFFGPAASLQ (256 aa)) is reductase. An FAD-binding FR-type domain is found at 150–260 (KDFRNFVVVK…SAPAGDFVLN (111 aa)). FAD is bound by residues Y188 and 204–207 (RQYS). 273-278 (GVGITP) contributes to the NADP(+) binding site. 394–397 (FFGP) is a binding site for FAD.

Belongs to the globin family. Two-domain flavohemoproteins subfamily. This sequence in the C-terminal section; belongs to the flavoprotein pyridine nucleotide cytochrome reductase family. Requires heme b as cofactor. The cofactor is FAD.

The enzyme catalyses 2 nitric oxide + NADPH + 2 O2 = 2 nitrate + NADP(+) + H(+). It carries out the reaction 2 nitric oxide + NADH + 2 O2 = 2 nitrate + NAD(+) + H(+). Is involved in NO detoxification in an aerobic process, termed nitric oxide dioxygenase (NOD) reaction that utilizes O(2) and NAD(P)H to convert NO to nitrate, which protects the bacterium from various noxious nitrogen compounds. Therefore, plays a central role in the inducible response to nitrosative stress. This Bacillus thuringiensis subsp. konkukian (strain 97-27) protein is Flavohemoprotein.